The sequence spans 427 residues: UDP-N-acetylglucosamine 1-carboxyvinyltransferase (427 aa).

Position 22-23 (22-23 (KN)) interacts with phosphoenolpyruvate. UDP-N-acetyl-alpha-D-glucosamine is bound at residue R99. Residue C123 is the Proton donor of the active site. Residue C123 is modified to 2-(S-cysteinyl)pyruvic acid O-phosphothioketal. UDP-N-acetyl-alpha-D-glucosamine contacts are provided by residues 128–132 (RPIDL), D313, and I335.

This sequence belongs to the EPSP synthase family. MurA subfamily.

It localises to the cytoplasm. The catalysed reaction is phosphoenolpyruvate + UDP-N-acetyl-alpha-D-glucosamine = UDP-N-acetyl-3-O-(1-carboxyvinyl)-alpha-D-glucosamine + phosphate. Its pathway is cell wall biogenesis; peptidoglycan biosynthesis. Functionally, cell wall formation. Adds enolpyruvyl to UDP-N-acetylglucosamine. The chain is UDP-N-acetylglucosamine 1-carboxyvinyltransferase from Novosphingobium aromaticivorans (strain ATCC 700278 / DSM 12444 / CCUG 56034 / CIP 105152 / NBRC 16084 / F199).